A 902-amino-acid chain; its full sequence is Protein translocase subunit SecA (902 aa).

ATP-binding positions include Gln87, 105–109, and Asp512; that span reads GEGKT. Positions 836–902 are disordered; it reads DVEKVEEQHR…KFKQCCGKLK (67 aa). Basic and acidic residues predominate over residues 840 to 863; the sequence is VEEQHRKSENAPREYQHEEVEHVG. Zn(2+) contacts are provided by Cys886, Cys888, Cys897, and Cys898.

It belongs to the SecA family. In terms of assembly, monomer and homodimer. Part of the essential Sec protein translocation apparatus which comprises SecA, SecYEG and auxiliary proteins SecDF-YajC and YidC. Zn(2+) serves as cofactor.

The protein resides in the cell inner membrane. It is found in the cytoplasm. It catalyses the reaction ATP + H2O + cellular proteinSide 1 = ADP + phosphate + cellular proteinSide 2.. In terms of biological role, part of the Sec protein translocase complex. Interacts with the SecYEG preprotein conducting channel. Has a central role in coupling the hydrolysis of ATP to the transfer of proteins into and across the cell membrane, serving both as a receptor for the preprotein-SecB complex and as an ATP-driven molecular motor driving the stepwise translocation of polypeptide chains across the membrane. The protein is Protein translocase subunit SecA of Pseudoalteromonas translucida (strain TAC 125).